Reading from the N-terminus, the 189-residue chain is Peptidyl-tRNA hydrolase (189 aa).

A tRNA-binding site is contributed by tyrosine 14. Histidine 19 acts as the Proton acceptor in catalysis. TRNA-binding residues include tyrosine 64, asparagine 66, and asparagine 112.

Belongs to the PTH family. As to quaternary structure, monomer.

It is found in the cytoplasm. It carries out the reaction an N-acyl-L-alpha-aminoacyl-tRNA + H2O = an N-acyl-L-amino acid + a tRNA + H(+). Its function is as follows. Hydrolyzes ribosome-free peptidyl-tRNAs (with 1 or more amino acids incorporated), which drop off the ribosome during protein synthesis, or as a result of ribosome stalling. Functionally, catalyzes the release of premature peptidyl moieties from peptidyl-tRNA molecules trapped in stalled 50S ribosomal subunits, and thus maintains levels of free tRNAs and 50S ribosomes. This Clostridium botulinum (strain Kyoto / Type A2) protein is Peptidyl-tRNA hydrolase.